The sequence spans 511 residues: Glucans biosynthesis protein G (511 aa).

Residues Met-1–Ala-22 form the signal peptide.

It belongs to the OpgD/OpgG family.

The protein localises to the periplasm. Its pathway is glycan metabolism; osmoregulated periplasmic glucan (OPG) biosynthesis. In terms of biological role, involved in the biosynthesis of osmoregulated periplasmic glucans (OPGs). This chain is Glucans biosynthesis protein G, found in Shigella dysenteriae serotype 1 (strain Sd197).